A 269-amino-acid chain; its full sequence is Ribonuclease HII (269 aa).

Residues tyrosine 83–leucine 269 form the RNase H type-2 domain. Aspartate 89, glutamate 90, and aspartate 185 together coordinate a divalent metal cation.

This sequence belongs to the RNase HII family. It depends on Mn(2+) as a cofactor. Mg(2+) serves as cofactor.

Its subcellular location is the cytoplasm. It carries out the reaction Endonucleolytic cleavage to 5'-phosphomonoester.. Its function is as follows. Endonuclease that specifically degrades the RNA of RNA-DNA hybrids. In Clostridium botulinum (strain Loch Maree / Type A3), this protein is Ribonuclease HII.